A 343-amino-acid polypeptide reads, in one-letter code: Palmitoyltransferase ZDHHC4 (343 aa).

Residues 1-2 (MD) lie on the Lumenal side of the membrane. The helical transmembrane segment at 3 to 23 (FLVLFSFYLAFLLICVIMICI) threads the bilayer. Over 24 to 67 (FTKSQRLKAVVLGGAQVCARVTPQCFQRAVQTLLHQLFHTRHPA) the chain is Cytoplasmic. Residues 68–88 (FLALHLLLQGLVYAEYTYEVF) traverse the membrane as a helical segment. Residues 89–95 (SYCRELE) are Lumenal-facing. Residues 96–116 (FSLPCLLLPYVLLSVNLVFFT) form a helical membrane-spanning segment. The Cytoplasmic segment spans residues 117-193 (LTCSTNPGTI…NCIGAWNTGY (77 aa)). A DHHC domain is found at 149-199 (SRCSTCDLRKPARSKHCRVCDRCVHRFDHHCVWVNNCIGAWNTGYFLIYLL). Cysteine 179 (S-palmitoyl cysteine intermediate) is an active-site residue. The chain crosses the membrane as a helical span at residues 194 to 214 (FLIYLLTLTASAATIAILSAA). The Lumenal segment spans residues 215–255 (FLLRLVAVSNLYQETYLDDLGRFQAVDTGFLIQHLFLAFPR). Residues 256-276 (IIFLLGFVIVLSLLLAGYLCF) form a helical membrane-spanning segment. At 277–343 (ALYLAATNQT…ATPSYKKKKR (67 aa)) the chain is on the cytoplasmic side. A Di-lysine motif motif is present at residues 340 to 343 (KKKR).

It belongs to the DHHC palmitoyltransferase family. As to quaternary structure, interacts with CPT1A.

It localises to the endoplasmic reticulum membrane. Its subcellular location is the golgi apparatus membrane. It is found in the cell membrane. The catalysed reaction is L-cysteinyl-[protein] + hexadecanoyl-CoA = S-hexadecanoyl-L-cysteinyl-[protein] + CoA. Functionally, palmitoyltransferase that could catalyze the addition of palmitate onto protein substrates including the D(2) dopamine receptor DRD2, GSK3B or MAVS. Mediates GSK3B palmitoylation to prevent its AKT1-mediated phosphorylation leading to activation of the STAT3 signaling pathway. Also catalyzes MAVS palmitoylation which promotes its stabilization and activation by inhibiting 'Lys-48'- but facilitating 'Lys-63'-linked ubiquitination. The protein is Palmitoyltransferase ZDHHC4 of Rattus norvegicus (Rat).